A 259-amino-acid polypeptide reads, in one-letter code: MNWLEAFILGIIQGLTEFLPISSTGHLYLGRHLFQLDEAGLFLDTMLHIGTLLAVFIYYKKEFIYLIKNPFSKLMLLLIVGTIPAVVIGLLFKDFFEDISKTGITIGWEFLVTGFFLYVADKQKNGRKKMGDITYKDAFIIGSFQAAAIFPAISRSGMTIVAALWRKLDRETAAYFSFLLSTPAIVGAIILQFADVFQGKAESISSTSLIVGTLSAAFFGYIAVSWMIQYLKRHSLKVFAYYVWGLGILILTLQFTDVF.

8 consecutive transmembrane segments (helical) span residues 1–21 (MNWLEAFILGIIQGLTEFLPI), 39–59 (AGLFLDTMLHIGTLLAVFIYY), 71–91 (FSKLMLLLIVGTIPAVVIGLL), 99–119 (ISKTGITIGWEFLVTGFFLYV), 133–153 (ITYKDAFIIGSFQAAAIFPAI), 173–193 (AAYFSFLLSTPAIVGAIILQF), 208–228 (SLIVGTLSAAFFGYIAVSWMI), and 239–259 (FAYYVWGLGILILTLQFTDVF).

The protein belongs to the UppP family.

It is found in the cell membrane. The catalysed reaction is di-trans,octa-cis-undecaprenyl diphosphate + H2O = di-trans,octa-cis-undecaprenyl phosphate + phosphate + H(+). In terms of biological role, catalyzes the dephosphorylation of undecaprenyl diphosphate (UPP). Confers resistance to bacitracin. This is Undecaprenyl-diphosphatase 4 from Bacillus thuringiensis subsp. konkukian (strain 97-27).